The following is a 797-amino-acid chain: Plakophilin-3 (797 aa).

The disordered stretch occupies residues 56–82; it reads QLGQQPRHNGAAEPEPEAETARGTSRG. R81 carries the omega-N-methylarginine modification. A phosphoserine mark is found at S123, S180, and S183. Position 195 is a phosphotyrosine; by SRC (Y195). A phosphoserine mark is found at S238 and S240. At T250 the chain carries Phosphothreonine. R261 carries the post-translational modification Omega-N-methylarginine. Positions 283-288 are required for interaction with SFN; sequence SLSLSL. Phosphoserine is present on residues S285, S313, S314, and S331. Positions 294–724 are required for interaction with GSK3B; that stretch reads LPDVHGFNSY…AEVLVNIIAV (431 aa). 8 ARM repeats span residues 305–348, 351–390, 393–432, 449–487, 491–536, 596–637, 645–684, and 689–730; these read SHRT…HKCY, AAAK…NLIY, ADNK…NLSS, TDLV…NLSS, ATRQ…NLSY, PKGL…NITA, VLSR…NLSR, and KDEM…NLVV. The segment at 516–797 is required for binding to PKP2 mRNA; sequence AGKCEDKSVE…GYRKEDFLGP (282 aa).

It belongs to the beta-catenin family. In terms of assembly, found in a complex composed of CDH1, RAP1A and PKP3; PKP3 acts as a scaffold protein within the complex, the complex is required for CDH1 localization to mature desmosome cell junctions. Interacts with FXR1; the interaction facilitates the binding of PKP3 to PKP2 mRNA. Interacts (via ARM repeats) with GSK3B; the interaction may be involved in PKP3 protein degradation. Interacts with hyperphosphorylated and hypophosphorylated RB1; the interaction inhibits RB1 interaction with and repression of the transcription factor E2F1, potentially via sequestering RB1 to the cytoplasm. Interacts with CDKN1A; the interaction sequesters CDKN1A to the cytoplasm thereby repressing its role as an inhibitor of CDK4- and CDK6-driven RB1 phosphorylation. Interacts (via N-terminus) with SFN; the interaction maintains the cytoplasmic pool of PKP3, facilitates PKP3 exchange at desmosomes and restricts PKP3 localization to existing desmosome cell junctions. Interacts (via N-terminus) with JUP; the interaction is required for PKP3 localization to desmosome cell-cell junctions. In terms of processing, phosphorylated at Ser-285 when localized to the cytoplasm, PKP3 at desmosome cell junctions is not phosphorylated. Phosphorylation at Try-195 by SRC is induced by reactive oxygen species and potentially acts as a release mechanism from desmosome cell-cell junctions. As to expression, expressed in the epidermis of the skin, in squamous non-cornifying epithelial cells in the vagina, single layer epithelia of the duodenum and pancreas acini and non-epithelial dendritic reticulum cells of lymph node follicles (at protein level). In terms of tissue distribution, expressed in the oral cavity mucosa, epidermis and small intestine epithelium (at protein level). Expressed in the oral cavity mucosa and epithelial cells of the crypts and villi in the small intestine (at protein level). Expressed in the epidermis with more abundant expression found in the basal and low spinous cells (at protein level).

It is found in the nucleus. It localises to the cell junction. The protein localises to the desmosome. Its subcellular location is the cytoplasm. The protein resides in the cell membrane. It is found in the adherens junction. Functionally, a component of desmosome cell-cell junctions which are required for positive regulation of cellular adhesion. Required for the localization of DSG2, DSP and PKP2 to mature desmosome junctions. May also play a role in the maintenance of DSG3 protein abundance in keratinocytes. Required for the formation of DSP-containing desmosome precursors in the cytoplasm during desmosome assembly. Also regulates the accumulation of CDH1 to mature desmosome junctions, via cAMP-dependent signaling and its interaction with activated RAP1A. Positively regulates the stabilization of PKP2 mRNA and therefore protein abundance, via its interaction with FXR1, may also regulate the protein abundance of DSP via the same mechanism. May also regulate the protein abundance of the desmosome component PKP1. Required for the organization of desmosome junctions at intercellular borders between basal keratinocytes of the epidermis, as a result plays a role in maintenance of the dermal barrier and regulation of the dermal inflammatory response. Required during epidermal keratinocyte differentiation for cell adherence at tricellular cell-cell contacts, via regulation of the timely formation of adherens junctions and desmosomes in a calcium-dependent manner, and may also play a role in the organization of the intracellular actin fiber belt. Acts as a negative regulator of the inflammatory response in hematopoietic cells of the skin and intestine, via modulation of proinflammatory cytokine production. Important for epithelial barrier maintenance in the intestine to reduce intestinal permeability, thereby plays a role in protection from intestinal-derived endotoxemia. Required for the development of hair follicles, via a role in the regulation of inner root sheaf length, correct alignment and anterior-posterior polarity of hair follicles. Promotes proliferation and cell-cycle G1/S phase transition of keratinocytes. Promotes E2F1-driven transcription of G1/S phase promoting genes by acting to release E2F1 from its inhibitory interaction with RB1, via sequestering RB1 and CDKN1A to the cytoplasm and thereby increasing CDK4- and CDK6-driven phosphorylation of RB1. May act as a scaffold protein to facilitate MAPK phosphorylation of RPS6KA protein family members and subsequently promote downstream EGFR signaling. May play a role in the positive regulation of transcription of Wnt-mediated TCF-responsive target genes. This is Plakophilin-3 (PKP3) from Homo sapiens (Human).